We begin with the raw amino-acid sequence, 142 residues long: Large ribosomal subunit protein uL11 (142 aa).

This sequence belongs to the universal ribosomal protein uL11 family. As to quaternary structure, part of the ribosomal stalk of the 50S ribosomal subunit. Interacts with L10 and the large rRNA to form the base of the stalk. L10 forms an elongated spine to which L12 dimers bind in a sequential fashion forming a multimeric L10(L12)X complex. Post-translationally, one or more lysine residues are methylated.

Functionally, forms part of the ribosomal stalk which helps the ribosome interact with GTP-bound translation factors. This chain is Large ribosomal subunit protein uL11, found in Xylella fastidiosa (strain 9a5c).